The primary structure comprises 346 residues: Protein U59 (346 aa).

This sequence belongs to the herpesviridae U59/UL88 family.

The chain is Protein U59 from Elephantid herpesvirus 1 (isolate Asian elephant/Berlin/Kiba/1998) (EIHV-1).